The sequence spans 28 residues: Antibacterial protein LC3 (28 aa).

Its function is as follows. Antibacterial activity against X.campestris, especially strain G, and P.solacearum PO1. The sequence is that of Antibacterial protein LC3 from Bacillus subtilis.